The following is a 312-amino-acid chain: Salivary protein SG34 (312 aa).

An N-terminal signal peptide occupies residues 1–20; that stretch reads MSPSKKILVLLLFPILLVSS. Residues 95–158 are a coiled coil; the sequence is NMEVQLLRES…QEEIEEQTKQ (64 aa).

The protein belongs to the salivary protein SG34 family. Female salivary gland (at protein level). Low-level expression in ovary.

Possible serine protease. Functionally, (Microbial infection) Modulates replication of duck Tembusu virus in salivary glands and virus release into the saliva, probably via the regulation of antimicrobial peptides expression in response to virus infection. In terms of biological role, (Microbial infection) Enhances replication of dengue virus type 2 in human keratinocytes, probably by suppressing the production of type I interferons and antimicrobial peptides in response to virus infection. The sequence is that of Salivary protein SG34 from Aedes aegypti (Yellowfever mosquito).